The following is a 321-amino-acid chain: Phospho-N-acetylmuramoyl-pentapeptide-transferase (321 aa).

10 helical membrane passes run 1–21, 49–69, 77–97, 112–132, 140–160, 176–196, 200–220, 225–245, 250–270, and 300–320; these read MIYV…PILI, TMGG…AIIF, ILLL…DYII, FLAQ…FNMI, IPFT…IVFW, GLAT…SFML, AVGT…IYNV, VFMG…VSIM, ISLI…ILQV, and VVSV…WIGV.

It belongs to the glycosyltransferase 4 family. MraY subfamily. Mg(2+) serves as cofactor.

It localises to the cell membrane. It catalyses the reaction UDP-N-acetyl-alpha-D-muramoyl-L-alanyl-gamma-D-glutamyl-L-lysyl-D-alanyl-D-alanine + di-trans,octa-cis-undecaprenyl phosphate = Mur2Ac(oyl-L-Ala-gamma-D-Glu-L-Lys-D-Ala-D-Ala)-di-trans,octa-cis-undecaprenyl diphosphate + UMP. The protein operates within cell wall biogenesis; peptidoglycan biosynthesis. Its function is as follows. Catalyzes the initial step of the lipid cycle reactions in the biosynthesis of the cell wall peptidoglycan: transfers peptidoglycan precursor phospho-MurNAc-pentapeptide from UDP-MurNAc-pentapeptide onto the lipid carrier undecaprenyl phosphate, yielding undecaprenyl-pyrophosphoryl-MurNAc-pentapeptide, known as lipid I. This chain is Phospho-N-acetylmuramoyl-pentapeptide-transferase, found in Staphylococcus carnosus (strain TM300).